The sequence spans 404 residues: Cysteine desulfurase IscS (404 aa).

Residues 75–76, asparagine 155, glutamine 183, and 203–205 each bind pyridoxal 5'-phosphate; these read AT and SGH. Position 206 is an N6-(pyridoxal phosphate)lysine (lysine 206). Threonine 243 serves as a coordination point for pyridoxal 5'-phosphate. The active-site Cysteine persulfide intermediate is cysteine 328. A [2Fe-2S] cluster-binding site is contributed by cysteine 328.

The protein belongs to the class-V pyridoxal-phosphate-dependent aminotransferase family. NifS/IscS subfamily. As to quaternary structure, homodimer. Forms a heterotetramer with IscU, interacts with other sulfur acceptors. Requires pyridoxal 5'-phosphate as cofactor.

It localises to the cytoplasm. The enzyme catalyses (sulfur carrier)-H + L-cysteine = (sulfur carrier)-SH + L-alanine. It participates in cofactor biosynthesis; iron-sulfur cluster biosynthesis. In terms of biological role, master enzyme that delivers sulfur to a number of partners involved in Fe-S cluster assembly, tRNA modification or cofactor biosynthesis. Catalyzes the removal of elemental sulfur and selenium atoms from cysteine and selenocysteine to produce alanine. Functions as a sulfur delivery protein for Fe-S cluster synthesis onto IscU, an Fe-S scaffold assembly protein, as well as other S acceptor proteins. Also functions as a selenium delivery protein in the pathway for the biosynthesis of selenophosphate. This Salmonella typhi protein is Cysteine desulfurase IscS.